Consider the following 672-residue polypeptide: Putative per-hexamer repeat protein 5 (672 aa).

Gly residues-rich tracts occupy residues 141–161, 171–191, 215–233, 243–263, 273–295, 303–355, and 365–389; these read TGTG…GTGT, TDRG…GTGT, TGTG…GTDT, and TGTG…GSGS. Disordered stretches follow at residues 141–193 and 213–672; these read TGTG…GTGT and TGTG…TGTA. Residues 390 to 424 show a composition bias toward low complexity; sequence GTAKVTGTATTTATVTETGTAKVTGTDTGTAKVTG. The segment covering 425–469 has biased composition (gly residues); it reads TGTGTGTGTGTGTGTGTGTGTGTGTGTGTGTGTGTGTGTGTGSGS. A compositionally biased stretch (low complexity) spans 470-486; the sequence is GTAKVTGTDTGTAKVTG. The span at 487 to 537 shows a compositional bias: gly residues; sequence TGTGTGTGTGTGTGTGTGTGTGTGSGSGSGSGSGSGSGTGTGTGLGSGSGS. Residues 538–552 are compositionally biased toward low complexity; that stretch reads GTAKVTGTGTAKVTG. Gly residues predominate over residues 553 to 617; the sequence is TGTGTGTGTG…GTGTGTGTGT (65 aa). Residues 618–636 are compositionally biased toward low complexity; it reads GTSTVTVRGTGTGTATATG. Gly residues-rich tracts occupy residues 637-653 and 663-672; these read TGTG…GTGT and RGTGTGTGTA.

The protein is Putative per-hexamer repeat protein 5 (Phxr5) of Mus musculus (Mouse).